We begin with the raw amino-acid sequence, 76 residues long: Small ribosomal subunit protein bS18 (76 aa).

This sequence belongs to the bacterial ribosomal protein bS18 family. As to quaternary structure, part of the 30S ribosomal subunit. Forms a tight heterodimer with protein bS6.

In terms of biological role, binds as a heterodimer with protein bS6 to the central domain of the 16S rRNA, where it helps stabilize the platform of the 30S subunit. In Oceanobacillus iheyensis (strain DSM 14371 / CIP 107618 / JCM 11309 / KCTC 3954 / HTE831), this protein is Small ribosomal subunit protein bS18.